We begin with the raw amino-acid sequence, 130 residues long: Cholecystokinin (130 aa).

The signal sequence occupies residues 1–20 (MYSGICIYMFLAMLSTSSSG). Residues 21–60 (QQATGSHNENPVATELEQSLTEHHRHVRVPSSAGQLKPIQ) constitute a propeptide that is removed on maturation. At tyrosine 112 the chain carries Sulfotyrosine. At phenylalanine 118 the chain carries Phenylalanine amide. The propeptide occupies 122–130 (SAEEYEYSS). Residues tyrosine 126 and tyrosine 128 each carry the sulfotyrosine modification.

The protein belongs to the gastrin/cholecystokinin family. The precursor is cleaved by proteases to produce a number of active cholecystokinins. Expressed in brain, duodenum and small intestine.

It is found in the secreted. Its function is as follows. This peptide hormone induces gall bladder contraction and the release of pancreatic enzymes in the gut. Its function in the brain is not clear. This is Cholecystokinin from Trachemys scripta (Red-eared slider turtle).